Reading from the N-terminus, the 253-residue chain is 5'-nucleotidase SurE (253 aa).

A divalent metal cation is bound by residues Asp8, Asp9, Ser39, and Asn95.

This sequence belongs to the SurE nucleotidase family. A divalent metal cation serves as cofactor.

The protein localises to the cytoplasm. The enzyme catalyses a ribonucleoside 5'-phosphate + H2O = a ribonucleoside + phosphate. Its function is as follows. Nucleotidase that shows phosphatase activity on nucleoside 5'-monophosphates. The sequence is that of 5'-nucleotidase SurE from Kosmotoga olearia (strain ATCC BAA-1733 / DSM 21960 / TBF 19.5.1).